The chain runs to 276 residues: Hydroxycinnamoyl-CoA hydratase-lyase (276 aa).

Residues Lys-29, Ala-68, Met-70, and Leu-72 each coordinate acetyl-CoA. Position 75 (Tyr-75) interacts with vanillin. Gly-120, Ser-142, and Trp-146 together coordinate acetyl-CoA. Positions 151 and 239 each coordinate vanillin.

It belongs to the enoyl-CoA hydratase/isomerase family. As to quaternary structure, homohexamer; dimer of trimers.

The catalysed reaction is (E)-feruloyl-CoA + H2O = vanillin + acetyl-CoA. It catalyses the reaction (E)-caffeoyl-CoA + H2O = 3,4-dihydroxybenzaldehyde + acetyl-CoA. The enzyme catalyses (E)-4-coumaroyl-CoA + H2O = 4-hydroxybenzaldehyde + acetyl-CoA. It carries out the reaction (E)-feruloyl-CoA + H2O = 3-hydroxy-3-(4-hydroxy-3-methoxyphenyl)propanoyl-CoA. The catalysed reaction is 3-hydroxy-3-(4-hydroxy-3-methoxyphenyl)propanoyl-CoA = vanillin + acetyl-CoA. It catalyses the reaction (E)-caffeoyl-CoA + H2O = 3-hydroxy-3-(3,4-dihydroxyphenyl)propanoyl-CoA. The enzyme catalyses 3-hydroxy-3-(3,4-dihydroxyphenyl)propanoyl-CoA = 3,4-dihydroxybenzaldehyde + acetyl-CoA. It carries out the reaction (E)-4-coumaroyl-CoA + H2O = 3-hydroxy-3-(4-hydroxyphenyl)propanoyl-CoA. The catalysed reaction is 3-hydroxy-3-(4-hydroxyphenyl)propanoyl-CoA = 4-hydroxybenzaldehyde + acetyl-CoA. Functionally, catalyzes the hydration of the acyl-CoA thioester of ferulic acid and the subsequent retro-aldol cleavage of the hydrated intermediate to yield vanillin (4-hydroxy-3-methoxy-benzaldehyde). The enzyme is also active with caffeoyl-CoA and 4-coumaroyl-CoA producing 3,4-dihydroxybenzaldehyde and 4-hydroxybenzaldehyde, respectively. The chain is Hydroxycinnamoyl-CoA hydratase-lyase from Pseudomonas fluorescens.